We begin with the raw amino-acid sequence, 799 residues long: Dipeptidyl peptidase family member 1 (799 aa).

The Cytoplasmic portion of the chain corresponds to 1 to 31; sequence MTAEADLLEGYDEELGGNESQKRDCKGITTA. A helical; Signal-anchor for type II membrane protein membrane pass occupies residues 32 to 52; it reads IVVVLLILVMIFAALVFFTPL. The Lumenal portion of the chain corresponds to 53-799; it reads FAAKSFGSWR…FLRQCFYTDK (747 aa). Asn-64, Asn-138, Asn-267, and Asn-335 each carry an N-linked (GlcNAc...) asparagine glycan. A disulfide bridge links Cys-474 with Cys-477. N-linked (GlcNAc...) asparagine glycosylation occurs at Asn-481. Cys-482 and Cys-500 are joined by a disulfide. A glycan (N-linked (GlcNAc...) asparagine) is linked at Asn-512. Catalysis depends on charge relay system residues Ser-669, Asp-742, and His-774. An intrachain disulfide couples Cys-689 to Cys-794.

This sequence belongs to the peptidase S9B family. DPPIV subfamily.

The protein localises to the cell membrane. In terms of biological role, removes N-terminal dipeptides sequentially from polypeptides. Essential for control of distal tip cell migration. The sequence is that of Dipeptidyl peptidase family member 1 (dpf-1) from Caenorhabditis elegans.